Reading from the N-terminus, the 420-residue chain is Serine palmitoyltransferase (420 aa).

Polar residues predominate over residues 1–21; the sequence is MKHNLQDNLQGEQMANTNSNG. Residues 1–25 form a disordered region; that stretch reads MKHNLQDNLQGEQMANTNSNGGKKP. Residues 132 to 133, His233, Thr261, and Ser263 contribute to the pyridoxal 5'-phosphate site; that span reads GM. An N6-(pyridoxal phosphate)lysine modification is found at Lys264.

This sequence belongs to the class-II pyridoxal-phosphate-dependent aminotransferase family. As to quaternary structure, homodimer. Pyridoxal 5'-phosphate is required as a cofactor.

It localises to the cytoplasm. It is found in the cell inner membrane. The catalysed reaction is L-serine + hexadecanoyl-CoA + H(+) = 3-oxosphinganine + CO2 + CoA. The protein operates within lipid metabolism; sphingolipid metabolism. Its activity is regulated as follows. Significantly inhibited by palmitoyl-CoA concentrations greater than 100 uM. Its function is as follows. Catalyzes the condensation of L-serine with palmitoyl-CoA (hexadecanoyl-CoA) to produce 3-oxosphinganine. In Bacteriovorax stolpii (Bdellovibrio stolpii), this protein is Serine palmitoyltransferase.